Reading from the N-terminus, the 249-residue chain is Tryptophan synthase alpha chain (249 aa).

Catalysis depends on proton acceptor residues glutamate 43 and aspartate 54.

It belongs to the TrpA family. In terms of assembly, tetramer of two alpha and two beta chains.

It carries out the reaction (1S,2R)-1-C-(indol-3-yl)glycerol 3-phosphate + L-serine = D-glyceraldehyde 3-phosphate + L-tryptophan + H2O. It functions in the pathway amino-acid biosynthesis; L-tryptophan biosynthesis; L-tryptophan from chorismate: step 5/5. In terms of biological role, the alpha subunit is responsible for the aldol cleavage of indoleglycerol phosphate to indole and glyceraldehyde 3-phosphate. This Campylobacter jejuni subsp. jejuni serotype O:6 (strain 81116 / NCTC 11828) protein is Tryptophan synthase alpha chain.